An 89-amino-acid chain; its full sequence is Small ribosomal subunit protein uS19 (89 aa).

The protein belongs to the universal ribosomal protein uS19 family.

Functionally, protein S19 forms a complex with S13 that binds strongly to the 16S ribosomal RNA. The chain is Small ribosomal subunit protein uS19 from Vesicomyosocius okutanii subsp. Calyptogena okutanii (strain HA).